Consider the following 710-residue polypeptide: Pentatricopeptide repeat-containing protein At5g39680 (710 aa).

Residue S2 is modified to N-acetylserine. PPR repeat units follow at residues 35-64 (NELL…NQSS), 68-98 (DAYQ…MPER), 99-133 (NVVS…GESR), 135-169 (NEFV…GLIS), 170-200 (HEFV…LPYC), 201-235 (DLSV…DFVW), 236-270 (NNLT…GFNA), 271-301 (EVEA…THAQ), 302-336 (NIFL…EVPP), 337-371 (NEYT…GYRN), 372-402 (HVMV…MTFR), 403-437 (DIVT…GEIP), 438-473 (NRIT…DVQP), and 474-504 (DIQH…APIE). The type E motif stretch occupies residues 509–584 (AWRTLLNACY…EPGVSWIGIR (76 aa)). The tract at residues 585-615 (NQTHVFLAEDNQHPEITLIYAKVKEVMSKIK) is type E(+) motif. The interval 616 to 710 (PLGYSPDVAG…DGQCSCCDYW (95 aa)) is type DYW motif.

The protein belongs to the PPR family. PCMP-H subfamily.

The protein is Pentatricopeptide repeat-containing protein At5g39680 (EMB2744) of Arabidopsis thaliana (Mouse-ear cress).